Here is a 979-residue protein sequence, read N- to C-terminus: Receptor-type tyrosine-protein phosphatase-like N (979 aa).

The first 37 residues, 1-37 (MRRPRRPGGSGGSGGSGGLRLLVCLLLLSGRPGGCSA), serve as a signal peptide directing secretion. Residues 38–134 (ISAHGCLFDR…HPRDRSGLVP (97 aa)) form an RESP18 homology domain region. The Lumenal segment spans residues 38–575 (ISAHGCLFDR…RQAHGISPMR (538 aa)). Cys-56 and Cys-65 are disulfide-bonded. Positions 113–130 (MERIPRLRPPEPHPRDRS) are enriched in basic and acidic residues. 3 disordered regions span residues 113–173 (MERI…GSPL), 289–330 (GRAR…AAQP), and 392–443 (MQRG…SSSV). Polar residues predominate over residues 145-155 (TQGNPTGSSPA). Positions 303-322 (RAEDSSEGHEEEVLGGRGEK) are enriched in basic and acidic residues. Residues Ser-307 and Ser-308 each carry the phosphoserine modification. Residues 414–424 (SPASSEVQQVL) are compositionally biased toward polar residues. Residues 449–575 (SPLGQSQPTV…RQAHGISPMR (127 aa)) are sufficient for dimerization of proICA512. Asn-506 and Asn-524 each carry an N-linked (GlcNAc...) asparagine glycan. A helical membrane pass occupies residues 576–600 (SVLLTLVALAGVAGLLVALAVALCM). Positions 601-732 (RHHSRQRDKE…PNTCAAAQDE (132 aa)) are sufficient for dimerization of proICA512. Over 601-979 (RHHSRQRDKE…VNAILKALPQ (379 aa)) the chain is Cytoplasmic. The tract at residues 644-680 (RAEGQPEPSRVSSVSSQFSDAAQASPSSHSSTPSWCE) is disordered. The span at 648 to 677 (QPEPSRVSSVSSQFSDAAQASPSSHSSTPS) shows a compositional bias: low complexity. One can recognise a Tyrosine-protein phosphatase domain in the interval 709-969 (LAKEWQALCA…EFALTAVAEE (261 aa)). Lys-754 is covalently cross-linked (Glycyl lysine isopeptide (Lys-Gly) (interchain with G-Cter in SUMO)).

Belongs to the protein-tyrosine phosphatase family. Receptor class 8 subfamily. In terms of assembly, homodimer; shown for the unprocessed protein (proICA512) in the endoplasmic reticulum and resolved during protein maturation as ICA512-TMF seems to be predominantly monomeric in secretory granules; however, ICA512-CCF interacts with ICA512-TMF disrupting the ICA512-TMF:SNTB2 complex. The isolated lumenal RESP18 homology domain has been shown to form disulfide-linked homooligomers. Interacts (via cytoplasmic domain) with phosphorylated SNTB2; this protects PTPRN against cleavage by CAPN1 to produce ICA512-CCF. Dephosphorylation of SNTB2 upon insulin stimulation disrupts the interaction and results in PTPRN cleavage. Interacts with SNX19. ICA512-CCF interacts with PIAS4; in the nucleus. Interacts with STAT5B (phosphorylated); down-regulated by ICA512-CCF sumoylation; ICA512-CCF prevents STAT5B dephosphorylation; ICA512-CCF mediates interaction of STAT5B with PIAS4. Interacts (via RESP18 homology domain) with insulin and proinsulin. Interacts with PTPRN2, PTPRA and PTPRE. Subject to proteolytic cleavage at multiple sites. Subject to cleavage on a pair of basic residues. On exocytosis of secretory granules in pancreatic beta-cells ICA512-TMF is transiently inserted in the plasma-membrane and cleaved by mu-type calpain CPN1 to yield ICA512-CCF. In terms of processing, O-glycosylated. Post-translationally, N-glycosylated. Sumoylated at two sites including Lys-754. Sumoylation decreases interaction with STAT5. As to expression, detected in pituitary. Detected in brain (at protein level). Detected in brain. Weakly expressed in the colon, intestine, stomach and pancreas.

It localises to the membrane. The protein localises to the cytoplasmic vesicle. The protein resides in the secretory vesicle membrane. Its subcellular location is the perikaryon. It is found in the cell projection. It localises to the axon. The protein localises to the synapse. The protein resides in the cell membrane. Its subcellular location is the endosome. It is found in the nucleus. Its function is as follows. Plays a role in vesicle-mediated secretory processes. Required for normal accumulation of secretory vesicles in hippocampus, pituitary and pancreatic islets. Required for the accumulation of normal levels of insulin-containing vesicles and preventing their degradation. Plays a role in insulin secretion in response to glucose stimuli. Required for normal accumulation of the neurotransmitters norepinephrine, dopamine and serotonin in the brain. In females, but not in males, required for normal accumulation and secretion of pituitary hormones, such as luteinizing hormone (LH) and follicle-stimulating hormone (FSH). Seems to lack intrinsic enzyme activity. Required to maintain normal levels of renin expression and renin release. May regulate catalytic active protein-tyrosine phosphatases such as PTPRA through dimerization. ICA512-TMF regulates dynamics and exocytosis of insulin secretory granules (SGs); binding of ICA512-TMF to SNTB2/beta-2-syntrophin is proposed to restrain SGs mobility and exocytosis by tethering them to the actin cytoskeleton depending on UTRN; the function is inhibited by cytoplasmic ICA512-CFF dimerizing with ICA512-TMF and displacing SNTB2. Functionally, ICA512-CCF translocated to the nucleus promotes expression of insulin and other granule-related genes; the function implicates binding to and regulating activity of STAT5B probably by preventing its dephosphorylation and potentially by inducing its sumoylation by recruiting PIAS4. Enhances pancreatic beta-cell proliferation by converging with signaling by STAT5B and STAT3. ICA512-CCF located in the cytoplasm regulates dynamics and exocytosis of insulin secretory granules (SGs) by dimerizing with ICA512-TMF and displacing SNTB2 thus enhancing SGs mobility and exocytosis. The polypeptide is Receptor-type tyrosine-protein phosphatase-like N (Ptprn) (Mus musculus (Mouse)).